The primary structure comprises 166 residues: MSGSHTAIAPLAPCMEGLPPLPKSLSGLLNSSGGSGWRDLERVYAQKSRIQDDLSRGGTSGSVQAHPKPPNLDAALALLRKEMVGLRQLDMSLLCQLYSLYESIQEYKGACQAASSADCTYAMENGFFDEEEEYYQEAGSLHKIGRENSEGTVSPISNEDWILENI.

This sequence belongs to the FAM89 family.

This is Protein FAM89A (fam89a) from Xenopus laevis (African clawed frog).